We begin with the raw amino-acid sequence, 896 residues long: Putative mannosylglycerate hydrolase (896 aa).

Residues histidine 12, aspartate 14, aspartate 125, and histidine 348 each coordinate a divalent metal cation. Catalysis depends on aspartate 125, which acts as the Nucleophile.

The protein belongs to the glycosyl hydrolase 38 family. A divalent metal cation is required as a cofactor.

It catalyses the reaction (2R)-2-O-(6-phospho-alpha-D-mannosyl)-glycerate + H2O = alpha-D-mannose 6-phosphate + (R)-glycerate. Its function is as follows. May hydrolyze 6-phospho-mannosyl-D-glycerate to mannose-6-phosphate and glycerate. In Halalkalibacterium halodurans (strain ATCC BAA-125 / DSM 18197 / FERM 7344 / JCM 9153 / C-125) (Bacillus halodurans), this protein is Putative mannosylglycerate hydrolase (mngB).